The following is a 674-amino-acid chain: Penicillin-binding protein activator LpoA (674 aa).

Residues 1–31 form the signal peptide; the sequence is MLSSTFVRTKAGRSKPVRLTAVIAAALFLAG. A lipid anchor (N-palmitoyl cysteine) is attached at C32. The S-diacylglycerol cysteine moiety is linked to residue C32. The disordered stretch occupies residues 291–349; that stretch reads GVTPSTPVQQQQPASVPEQAAQPASTDPNANGAVSTSAPDAAPVTAAQPSAPSTAPITP. Positions 292–315 are enriched in low complexity; it reads VTPSTPVQQQQPASVPEQAAQPAS. Polar residues predominate over residues 316-328; sequence TDPNANGAVSTSA. The segment covering 331–349 has biased composition (low complexity); it reads AAPVTAAQPSAPSTAPITP.

This sequence belongs to the LpoA family. In terms of assembly, interacts with PBP1a.

It localises to the cell outer membrane. Its function is as follows. Regulator of peptidoglycan synthesis that is essential for the function of penicillin-binding protein 1A (PBP1a). The protein is Penicillin-binding protein activator LpoA of Serratia proteamaculans (strain 568).